Reading from the N-terminus, the 658-residue chain is Endoglin (658 aa).

Residues 1 to 25 form the signal peptide; that stretch reads MDRGTLPLAVALLLASCSLSPTSLA. An OR1, N-terminal part region spans residues 26–46; that stretch reads ETVHCDLQPVGPERGEVTYTT. Residues 26 to 337 form a required for interaction with GDF2 region; sequence ETVHCDLQPV…SSCGGRLQTS (312 aa). The Extracellular segment spans residues 26 to 586; it reads ETVHCDLQPV…PDLSGCTSKG (561 aa). 7 disulfide bridges follow: cysteine 30–cysteine 207, cysteine 53–cysteine 182, cysteine 242–cysteine 330, cysteine 350–cysteine 382, cysteine 363–cysteine 442, cysteine 394–cysteine 412, and cysteine 493–cysteine 549. The OR2 stretch occupies residues 47–199; that stretch reads SQVSKGCVAQ…MGRTLEWRPR (153 aa). Residues asparagine 88, asparagine 102, asparagine 121, and asparagine 134 are each glycosylated (N-linked (GlcNAc...) asparagine). The tract at residues 200 to 330 is OR1, C-terminal part; it reads TPALVRGCHL…SIVSLHASSC (131 aa). Residues 270–282 form an essential for interaction with GDF2 region; it reads QIWTTGEYSFKIF. Asparagine 307 is a glycosylation site (N-linked (GlcNAc...) asparagine). The region spanning 363-533 is the ZP domain; it reads CADDAMTLVL…PEGDPRFSFL (171 aa). The Cell attachment site signature appears at 399–401; that stretch reads RGD. A helical membrane pass occupies residues 587–611; that stretch reads LVLPAVLGITFGAFLIGALLTAALW. Residues 612–658 lie on the Cytoplasmic side of the membrane; that stretch reads YIYSHTRSPSKREPVVAVAAPASSESSSTNHSIGSTQSTPCSTSSMA. A compositionally biased stretch (low complexity) spans 626–639; sequence VVAVAAPASSESSS. The segment at 626–658 is disordered; the sequence is VVAVAAPASSESSSTNHSIGSTQSTPCSTSSMA. Positions 640 to 658 are enriched in polar residues; sequence TNHSIGSTQSTPCSTSSMA. Phosphoserine; by TGFBR1 occurs at positions 646 and 649.

Homodimer; disulfide-linked. Forms a heteromeric complex with the signaling receptors for transforming growth factor-beta: TGFBR1 and/or TGFBR2. It is able to bind TGFB1 and TGFB2 with high affinity, but not TGFB3. Interacts with GDF2, forming a heterotetramer with a 2:2 stoichiometry. Interacts with ACVRL1. Can form a heteromeric complex with GDF2 and ACVRL1. Interacts with BMP10. Interacts with DYNLT4. Interacts with ARRB2. Detected on umbilical veil endothelial cells. Detected in placenta (at protein level). Detected on endothelial cells.

The protein localises to the cell membrane. In terms of biological role, vascular endothelium glycoprotein that plays an important role in the regulation of angiogenesis. Required for normal structure and integrity of adult vasculature. Regulates the migration of vascular endothelial cells. Required for normal extraembryonic angiogenesis and for embryonic heart development. May regulate endothelial cell shape changes in response to blood flow, which drive vascular remodeling and establishment of normal vascular morphology during angiogenesis. May play a critical role in the binding of endothelial cells to integrins and/or other RGD receptors. Acts as a TGF-beta coreceptor and is involved in the TGF-beta/BMP signaling cascade that ultimately leads to the activation of SMAD transcription factors. Required for GDF2/BMP9 signaling through SMAD1 in endothelial cells and modulates TGFB1 signaling through SMAD3. The chain is Endoglin (ENG) from Homo sapiens (Human).